Reading from the N-terminus, the 199-residue chain is MIALLTGKLAYKSPEFIILDVNGVGYQVHIPFSTYYTLPAEGGALSLQIHTSVKEDAINLYGFRTQQEKELFQLLIGVSGVGPKLATGILSNSEPSELADSLVNGNLARLSAIPGIGKKTAERLVLELKEKMKKLGLAQPQAGGATAPAKQEIRDDVLSALINLGYKEAVVQKALAELKVTEDATVELVLKQALKILMK.

Positions 1–64 are domain I; sequence MIALLTGKLA…EDAINLYGFR (64 aa). Residues 65–143 form a domain II region; the sequence is TQQEKELFQL…KLGLAQPQAG (79 aa). Residues 144-148 form a flexible linker region; the sequence is GATAP. The tract at residues 149 to 199 is domain III; sequence AKQEIRDDVLSALINLGYKEAVVQKALAELKVTEDATVELVLKQALKILMK.

The protein belongs to the RuvA family. As to quaternary structure, homotetramer. Forms an RuvA(8)-RuvB(12)-Holliday junction (HJ) complex. HJ DNA is sandwiched between 2 RuvA tetramers; dsDNA enters through RuvA and exits via RuvB. An RuvB hexamer assembles on each DNA strand where it exits the tetramer. Each RuvB hexamer is contacted by two RuvA subunits (via domain III) on 2 adjacent RuvB subunits; this complex drives branch migration. In the full resolvosome a probable DNA-RuvA(4)-RuvB(12)-RuvC(2) complex forms which resolves the HJ.

It is found in the cytoplasm. Functionally, the RuvA-RuvB-RuvC complex processes Holliday junction (HJ) DNA during genetic recombination and DNA repair, while the RuvA-RuvB complex plays an important role in the rescue of blocked DNA replication forks via replication fork reversal (RFR). RuvA specifically binds to HJ cruciform DNA, conferring on it an open structure. The RuvB hexamer acts as an ATP-dependent pump, pulling dsDNA into and through the RuvAB complex. HJ branch migration allows RuvC to scan DNA until it finds its consensus sequence, where it cleaves and resolves the cruciform DNA. This is Holliday junction branch migration complex subunit RuvA from Geobacter sp. (strain M21).